Here is a 290-residue protein sequence, read N- to C-terminus: ATP synthase gamma chain (290 aa).

Belongs to the ATPase gamma chain family. As to quaternary structure, F-type ATPases have 2 components, CF(1) - the catalytic core - and CF(0) - the membrane proton channel. CF(1) has five subunits: alpha(3), beta(3), gamma(1), delta(1), epsilon(1). CF(0) has three main subunits: a, b and c.

The protein resides in the cell inner membrane. Its function is as follows. Produces ATP from ADP in the presence of a proton gradient across the membrane. The gamma chain is believed to be important in regulating ATPase activity and the flow of protons through the CF(0) complex. This chain is ATP synthase gamma chain, found in Buchnera aphidicola subsp. Acyrthosiphon pisum (strain APS) (Acyrthosiphon pisum symbiotic bacterium).